The following is a 225-amino-acid chain: PKHD-type hydroxylase YbiX (225 aa).

A Fe2OG dioxygenase domain is found at threonine 78–serine 177. Fe cation is bound by residues histidine 96, aspartate 98, and histidine 158. Arginine 168 lines the 2-oxoglutarate pocket.

Fe(2+) is required as a cofactor. L-ascorbate serves as cofactor.

This chain is PKHD-type hydroxylase YbiX, found in Shigella flexneri serotype 5b (strain 8401).